Here is a 289-residue protein sequence, read N- to C-terminus: ATP synthase subunit a (289 aa).

6 helical membrane passes run 43 to 63 (AFHL…VLIF), 104 to 124 (IAPL…VDLI), 160 to 180 (LSVF…GGFI), 193 to 213 (IFVQ…TLIA), 232 to 252 (VFIL…GLGV), and 259 to 279 (AVFH…LTIV).

Belongs to the ATPase A chain family. As to quaternary structure, F-type ATPases have 2 components, CF(1) - the catalytic core - and CF(0) - the membrane proton channel. CF(1) has five subunits: alpha(3), beta(3), gamma(1), delta(1), epsilon(1). CF(0) has three main subunits: a(1), b(2) and c(9-12). The alpha and beta chains form an alternating ring which encloses part of the gamma chain. CF(1) is attached to CF(0) by a central stalk formed by the gamma and epsilon chains, while a peripheral stalk is formed by the delta and b chains.

The protein resides in the cell inner membrane. In terms of biological role, key component of the proton channel; it plays a direct role in the translocation of protons across the membrane. The polypeptide is ATP synthase subunit a (Pseudomonas fluorescens (strain SBW25)).